A 221-amino-acid polypeptide reads, in one-letter code: UPF0758 protein HI_0952 (221 aa).

The MPN domain maps to 99 to 221 (IINDPETVKL…CYSFAENCLL (123 aa)). Positions 170, 172, and 183 each coordinate Zn(2+). A JAMM motif motif is present at residues 170–183 (HNHPSGITEPSYSD).

Belongs to the UPF0758 family.

The sequence is that of UPF0758 protein HI_0952 from Haemophilus influenzae (strain ATCC 51907 / DSM 11121 / KW20 / Rd).